The sequence spans 213 residues: Glycerol-3-phosphate acyltransferase (213 aa).

A run of 6 helical transmembrane segments spans residues 3–23 (IIIL…GLWI), 48–68 (ILGV…GTLA), 71–91 (LPLI…LAVI), 119–139 (PFFL…FSMI), 144–164 (VVAA…GFIL), and 165–185 (TSYD…IIFR).

Belongs to the PlsY family. As to quaternary structure, probably interacts with PlsX.

The protein localises to the cell membrane. It catalyses the reaction an acyl phosphate + sn-glycerol 3-phosphate = a 1-acyl-sn-glycero-3-phosphate + phosphate. It participates in lipid metabolism; phospholipid metabolism. Its function is as follows. Catalyzes the transfer of an acyl group from acyl-phosphate (acyl-PO(4)) to glycerol-3-phosphate (G3P) to form lysophosphatidic acid (LPA). This enzyme utilizes acyl-phosphate as fatty acyl donor, but not acyl-CoA or acyl-ACP. The sequence is that of Glycerol-3-phosphate acyltransferase from Lactococcus lactis subsp. cremoris (strain SK11).